A 366-amino-acid polypeptide reads, in one-letter code: Chorismate synthase (366 aa).

NADP(+) contacts are provided by Arg48 and Arg54. FMN is bound by residues 125-127 (RSS), 238-239 (NA), Gly278, 293-297 (KPTSS), and Arg319.

Belongs to the chorismate synthase family. Homotetramer. The cofactor is FMNH2.

It catalyses the reaction 5-O-(1-carboxyvinyl)-3-phosphoshikimate = chorismate + phosphate. Its pathway is metabolic intermediate biosynthesis; chorismate biosynthesis; chorismate from D-erythrose 4-phosphate and phosphoenolpyruvate: step 7/7. Functionally, catalyzes the anti-1,4-elimination of the C-3 phosphate and the C-6 proR hydrogen from 5-enolpyruvylshikimate-3-phosphate (EPSP) to yield chorismate, which is the branch point compound that serves as the starting substrate for the three terminal pathways of aromatic amino acid biosynthesis. This reaction introduces a second double bond into the aromatic ring system. The polypeptide is Chorismate synthase (Paraburkholderia xenovorans (strain LB400)).